The sequence spans 289 residues: D-xylonolactone lactonase (289 aa).

Glu-17 is a Fe(2+) binding site. Residues Arg-98, Asn-100, Glu-119, and Asn-145 each contribute to the D-xylono-1,5-lactone site. Asn-145 and Asp-195 together coordinate Fe(2+). Asp-195 functions as the Proton donor/acceptor in the catalytic mechanism.

It belongs to the SMP-30/CGR1 family. Fe(2+) serves as cofactor.

The catalysed reaction is D-xylono-1,5-lactone + H2O = D-xylonate + H(+). Its function is as follows. Involved in the degradation of D-xylose. Catalyzes the hydrolysis of D-xylonolactone to D-xylonate. In Caulobacter vibrioides (strain ATCC 19089 / CIP 103742 / CB 15) (Caulobacter crescentus), this protein is D-xylonolactone lactonase.